The chain runs to 208 residues: Proheparin-binding EGF-like growth factor (208 aa).

An N-terminal signal peptide occupies residues 1–19; that stretch reads MKLLPSVVLKLFLAAVLSA. A propeptide spans 20–62 (or 72, or 73, or 76, or 81); it reads LVTGESLERLRRGLAAGTSNPDPPTVSTDQLLPLGGGRDRKVR. The Extracellular segment spans residues 20-160; sequence LVTGESLERL…ENRLYTYDHT (141 aa). The interval 33-56 is disordered; the sequence is LAAGTSNPDPPTVSTDQLLPLGGG. A compositionally biased stretch (polar residues) spans 36-49; sequence GTSNPDPPTVSTDQ. O-linked (GalNAc...) threonine glycosylation is present at threonine 37. The O-linked (GalNAc...) serine glycan is linked to serine 38. 4 O-linked (GalNAc...) threonine glycosylation sites follow: threonine 44, threonine 47, threonine 75, and threonine 85. The tract at residues 82 to 104 is disordered; that stretch reads ALATPNKEEHGKRKKKGKGLGKK. The span at 93–102 shows a compositional bias: basic residues; sequence KRKKKGKGLG. Residues 104 to 144 enclose the EGF-like domain; it reads KRDPCLRKYKDFCIHGECKYVKELRAPSCICHPGYHGERCH. 3 disulfide bridges follow: cysteine 108–cysteine 121, cysteine 116–cysteine 132, and cysteine 134–cysteine 143. The propeptide at 149-208 is C-terminal; that stretch reads PVENRLYTYDHTTILAVVAVVLSSVCLLVIVGLLMFRYHRRGGYDVENEEKVKLGMTNSH. A helical transmembrane segment spans residues 161-184; the sequence is TILAVVAVVLSSVCLLVIVGLLMF. Residues 185-208 are Cytoplasmic-facing; it reads RYHRRGGYDVENEEKVKLGMTNSH.

As to quaternary structure, interacts with FBLN1. Interacts with EGFR and ERBB4. In terms of processing, several N-termini have been identified by direct sequencing. The forms with N-termini 63, 73 and 74 have been tested and found to be biologically active. O-glycosylated with core 1 or possibly core 8 glycans. Thr-47 is a minor glycosylation site compared to Thr-44.

It is found in the secreted. The protein localises to the extracellular space. The protein resides in the cell membrane. Its function is as follows. Growth factor that mediates its effects via EGFR, ERBB2 and ERBB4. Required for normal cardiac valve formation and normal heart function. Promotes smooth muscle cell proliferation. May be involved in macrophage-mediated cellular proliferation. It is mitogenic for fibroblasts, but not endothelial cells. It is able to bind EGF receptor/EGFR with higher affinity than EGF itself and is a far more potent mitogen for smooth muscle cells than EGF. Also acts as a diphtheria toxin receptor. The chain is Proheparin-binding EGF-like growth factor (HBEGF) from Homo sapiens (Human).